Reading from the N-terminus, the 229-residue chain is Matrix protein (229 aa).

The dynamin binding signature appears at 2 to 4 (QRL). The PPXY motif signature appears at 30 to 33 (PPSY). Positions 42–45 (PTAP) match the PTAP/PSAP motif motif.

The protein belongs to the vesiculoviruses matrix protein family. In terms of assembly, homomultimer. Interacts with viral nucleocapsid; this interaction contributes to the virion assembly. Interacts with the viral envelope glycoprotein; this interaction contributes to the virion assembly. Interacts with host RAE1-NUP98 complex. Interacts with host NEDD4 and TSG101. Interacts with host dynamin. Interacts with host NDUFAF4; the interaction inhibits viral propagation and is independent of interferon activation. Interacts with host GTF2H5; the interaction may inhibit host transcription. Interacts with host DRG1. Interaction with host CTDNEP1. Interaction with host ABCE1. Post-translationally, phosphorylated by host.

It localises to the virion. It is found in the host endomembrane system. The protein localises to the host nucleus membrane. Its subcellular location is the host nucleus. The protein resides in the host cytoplasm. Forms a double layer around the helical nucleocapsid, the inner matrix layer binding to the N helix and the outer matrix layer binding to the envelope glycoprotein. Plays a major role in assembly and budding of virion, by recruiting cellular partners of the ESCRT complexes that play a key role in releasing the budding particle from the host membrane. Condensates the ribonucleocapsid core during virus assembly. Inhibits the host mRNA nuclear export thereby inducing the shut off of cellular transcription and preventing the interferon signaling and the establishment of antiviral state in infected cells. This shutoff presumably inhibits interferon signaling and thus establishment of antiviral state in virus infected cells. Induces cell-rounding, cytoskeleton disorganization and apoptosis in infected cell. Inhibits host transcription, possibly through interaction with host DNA repair factor IIH/TFIIH GTF2H5 subunit. The protein is Matrix protein (M) of Homo sapiens (Human).